Consider the following 127-residue polypeptide: Snaclec macrovipecetin subunit beta (127 aa).

3 disulfide bridges follow: C4/C15, C32/C121, and C98/C113. Positions 11-122 constitute a C-type lectin domain; the sequence is YEGHCYKVFD…CSRTYKFVCK (112 aa).

Heterodimer of subunits alpha and beta; disulfide-linked. As to expression, expressed by the venom gland.

It is found in the secreted. Functionally, interferes with one step of hemostasis (modulation of platelet aggregation, or coagulation cascade, for example). The chain is Snaclec macrovipecetin subunit beta from Macrovipera lebetinus (Levantine viper).